Here is a 264-residue protein sequence, read N- to C-terminus: Methionine aminopeptidase (264 aa).

Histidine 79 is a binding site for substrate. Positions 97, 108, and 171 each coordinate a divalent metal cation. Histidine 178 is a substrate binding site. A divalent metal cation is bound by residues glutamate 204 and glutamate 235.

This sequence belongs to the peptidase M24A family. Methionine aminopeptidase type 1 subfamily. In terms of assembly, monomer. Co(2+) serves as cofactor. Zn(2+) is required as a cofactor. It depends on Mn(2+) as a cofactor. Requires Fe(2+) as cofactor.

The enzyme catalyses Release of N-terminal amino acids, preferentially methionine, from peptides and arylamides.. Functionally, removes the N-terminal methionine from nascent proteins. The N-terminal methionine is often cleaved when the second residue in the primary sequence is small and uncharged (Met-Ala-, Cys, Gly, Pro, Ser, Thr, or Val). Requires deformylation of the N(alpha)-formylated initiator methionine before it can be hydrolyzed. This chain is Methionine aminopeptidase, found in Salmonella typhi.